The chain runs to 493 residues: Guanosine-5'-triphosphate,3'-diphosphate pyrophosphatase (493 aa).

Belongs to the GppA/Ppx family. GppA subfamily.

It carries out the reaction guanosine 3'-diphosphate 5'-triphosphate + H2O = guanosine 3',5'-bis(diphosphate) + phosphate + H(+). It functions in the pathway purine metabolism; ppGpp biosynthesis; ppGpp from GTP: step 2/2. Its function is as follows. Catalyzes the conversion of pppGpp to ppGpp. Guanosine pentaphosphate (pppGpp) is a cytoplasmic signaling molecule which together with ppGpp controls the 'stringent response', an adaptive process that allows bacteria to respond to amino acid starvation, resulting in the coordinated regulation of numerous cellular activities. The sequence is that of Guanosine-5'-triphosphate,3'-diphosphate pyrophosphatase from Salmonella paratyphi B (strain ATCC BAA-1250 / SPB7).